The following is a 221-amino-acid chain: Pyridoxine/pyridoxamine 5'-phosphate oxidase (221 aa).

A disordered region spans residues 1-21; that stretch reads MDYSDPAELRESYDGAPLDPR. Residues 10–13 and Lys68 contribute to the substrate site; that span reads RESY. Residues 63–68, 78–79, Arg84, Lys85, and Gln107 contribute to the FMN site; these read RTVLLK and FT. Substrate-binding residues include Tyr125, Arg129, and Ser133. Residues 143–144 and Trp189 each bind FMN; that span reads QS. Residue 195-197 participates in substrate binding; that stretch reads RMH. Arg199 serves as a coordination point for FMN.

Belongs to the pyridoxamine 5'-phosphate oxidase family. Homodimer. The cofactor is FMN.

The catalysed reaction is pyridoxamine 5'-phosphate + O2 + H2O = pyridoxal 5'-phosphate + H2O2 + NH4(+). It catalyses the reaction pyridoxine 5'-phosphate + O2 = pyridoxal 5'-phosphate + H2O2. The protein operates within cofactor metabolism; pyridoxal 5'-phosphate salvage; pyridoxal 5'-phosphate from pyridoxamine 5'-phosphate: step 1/1. It functions in the pathway cofactor metabolism; pyridoxal 5'-phosphate salvage; pyridoxal 5'-phosphate from pyridoxine 5'-phosphate: step 1/1. In terms of biological role, catalyzes the oxidation of either pyridoxine 5'-phosphate (PNP) or pyridoxamine 5'-phosphate (PMP) into pyridoxal 5'-phosphate (PLP). The polypeptide is Pyridoxine/pyridoxamine 5'-phosphate oxidase (Thermobifida fusca (strain YX)).